We begin with the raw amino-acid sequence, 587 residues long: Arginine--tRNA ligase (587 aa).

Positions 127–137 (PNLAKEMHVGH) match the 'HIGH' region motif.

The protein belongs to the class-I aminoacyl-tRNA synthetase family. In terms of assembly, monomer.

The protein localises to the cytoplasm. It carries out the reaction tRNA(Arg) + L-arginine + ATP = L-arginyl-tRNA(Arg) + AMP + diphosphate. The sequence is that of Arginine--tRNA ligase from Pseudomonas paraeruginosa (strain DSM 24068 / PA7) (Pseudomonas aeruginosa (strain PA7)).